Consider the following 199-residue polypeptide: NAD(P)H dehydrogenase (quinone) (199 aa).

Residues 4 to 190 (VLVLYYSSWG…DGARFQGRHV (187 aa)) enclose the Flavodoxin-like domain. FMN is bound by residues 10–15 (SSWGHV) and 78–80 (TRY). Tryptophan 12 is an NAD(+) binding site. Position 98 (tryptophan 98) interacts with substrate. FMN-binding positions include 113–119 (STASQHG) and histidine 134.

Belongs to the WrbA family. Requires FMN as cofactor.

It carries out the reaction a quinone + NADH + H(+) = a quinol + NAD(+). The enzyme catalyses a quinone + NADPH + H(+) = a quinol + NADP(+). The polypeptide is NAD(P)H dehydrogenase (quinone) (Methylorubrum extorquens (strain CM4 / NCIMB 13688) (Methylobacterium extorquens)).